We begin with the raw amino-acid sequence, 338 residues long: Photosystem II assembly lipoprotein Ycf48 (338 aa).

An N-terminal signal peptide occupies residues 1 to 23 (MKKIITSFPNLLLSILLCFVLSS). A lipid anchor (N-palmitoyl cysteine) is attached at Cys24. Cys24 carries the S-diacylglycerol cysteine lipid modification.

It belongs to the Ycf48 family. Part of early PSII assembly complexes which includes D1 (psbA) and PsbI; not found in mature PSII. Binds to the lumenal side of PSII complexes. Interacts with YidC.

The protein resides in the cellular thylakoid membrane. In terms of biological role, a factor required for optimal assembly of photosystem II (PSII), acting in the early stages of PSII assembly. Also plays a role in replacement of photodamaged D1 (psbA). Assists YidC in synthesis of chlorophyll-binding proteins. This chain is Photosystem II assembly lipoprotein Ycf48, found in Prochlorococcus marinus (strain MIT 9312).